Consider the following 370-residue polypeptide: Dual-specificity RNA methyltransferase RlmN (370 aa).

The active-site Proton acceptor is the E93. A Radical SAM core domain is found at 99–337; the sequence is EEGRGTLCVS…VTTVRKTRGD (239 aa). The cysteines at positions 106 and 343 are disulfide-linked. [4Fe-4S] cluster is bound by residues C113, C117, and C120. Residues 167 to 168, S199, 221 to 223, and N300 each bind S-adenosyl-L-methionine; these read GE and SLH. The active-site S-methylcysteine intermediate is C343.

This sequence belongs to the radical SAM superfamily. RlmN family. Requires [4Fe-4S] cluster as cofactor.

Its subcellular location is the cytoplasm. It carries out the reaction adenosine(2503) in 23S rRNA + 2 reduced [2Fe-2S]-[ferredoxin] + 2 S-adenosyl-L-methionine = 2-methyladenosine(2503) in 23S rRNA + 5'-deoxyadenosine + L-methionine + 2 oxidized [2Fe-2S]-[ferredoxin] + S-adenosyl-L-homocysteine. The enzyme catalyses adenosine(37) in tRNA + 2 reduced [2Fe-2S]-[ferredoxin] + 2 S-adenosyl-L-methionine = 2-methyladenosine(37) in tRNA + 5'-deoxyadenosine + L-methionine + 2 oxidized [2Fe-2S]-[ferredoxin] + S-adenosyl-L-homocysteine. Its function is as follows. Specifically methylates position 2 of adenine 2503 in 23S rRNA and position 2 of adenine 37 in tRNAs. m2A2503 modification seems to play a crucial role in the proofreading step occurring at the peptidyl transferase center and thus would serve to optimize ribosomal fidelity. This Francisella tularensis subsp. mediasiatica (strain FSC147) protein is Dual-specificity RNA methyltransferase RlmN.